Consider the following 688-residue polypeptide: PR domain zinc finger protein 8 (688 aa).

The region spanning 16–131 is the SET domain; sequence KAVQQCLTDI…KDEELLVWYG (116 aa). Tyr130 contacts S-adenosyl-L-methionine. The segment at 154 to 182 adopts a C2H2-type 1 zinc-finger fold; sequence YTCLECSQRFQFEFPYVAHLRFRCPKRLH. Disordered regions lie at residues 184 to 309 and 397 to 506; these read TDAN…GCKG and EEAA…PARS. Positions 192–208 are enriched in gly residues; that stretch reads QGGGLGTKDHGGGGGGK. Low complexity-rich tracts occupy residues 209 to 219 and 275 to 284; these read EQQQQQQQQQQ and GSSSCVAAPG. Gly residues-rich tracts occupy residues 414-424 and 470-489; these read AGGGVAGGGSN and LGGG…GGGQ. C2H2-type zinc fingers lie at residues 624–647 and 665–687; these read NWCA…RSHH and LKCP…MTSH.

The protein belongs to the class V-like SAM-binding methyltransferase superfamily. In terms of assembly, interacts with BHLHE22. Interacts with EPM2A and NHLRC1. This interaction sequesters EPM2A and NHLRC1 to the nucleus. As to expression, expressed in brain, heart, liver, testes, retina. Highest expression is observed in the retina and hippocampus; moderately expressed in the cortex and cerebellum. In the retina, it is expressed in bipolar and amacrine cells.

It localises to the nucleus. Probable histone methyltransferase, preferentially acting on 'Lys-9' of histone H3. Histone methyltransferase activity has not been confirmed in other species. Involved in the control of steroidogenesis through transcriptional repression of steroidogenesis marker genes such as CYP17A1 and LHCGR. Forms with BHLHE22 a transcriptional repressor complex controlling genes involved in neural development and neuronal differentiation. In the retina, it is required for rod bipolar and type 2 OFF-cone bipolar cell survival. The chain is PR domain zinc finger protein 8 (Prdm8) from Mus musculus (Mouse).